We begin with the raw amino-acid sequence, 212 residues long: Large ribosomal subunit protein uL3 (212 aa).

Gln153 is modified (N5-methylglutamine).

This sequence belongs to the universal ribosomal protein uL3 family. Part of the 50S ribosomal subunit. Forms a cluster with proteins L14 and L19. Post-translationally, methylated by PrmB.

Functionally, one of the primary rRNA binding proteins, it binds directly near the 3'-end of the 23S rRNA, where it nucleates assembly of the 50S subunit. The polypeptide is Large ribosomal subunit protein uL3 (Shewanella piezotolerans (strain WP3 / JCM 13877)).